The primary structure comprises 271 residues: Putative phosphoenolpyruvate synthase regulatory protein (271 aa).

Position 151–158 (151–158 (GVSRSGKT)) interacts with ADP.

It belongs to the pyruvate, phosphate/water dikinase regulatory protein family. PSRP subfamily.

The catalysed reaction is [pyruvate, water dikinase] + ADP = [pyruvate, water dikinase]-phosphate + AMP + H(+). It catalyses the reaction [pyruvate, water dikinase]-phosphate + phosphate + H(+) = [pyruvate, water dikinase] + diphosphate. Its function is as follows. Bifunctional serine/threonine kinase and phosphorylase involved in the regulation of the phosphoenolpyruvate synthase (PEPS) by catalyzing its phosphorylation/dephosphorylation. This Paraburkholderia xenovorans (strain LB400) protein is Putative phosphoenolpyruvate synthase regulatory protein.